We begin with the raw amino-acid sequence, 432 residues long: MDNTTPQQIFSLRSHENSISNIEEVFLWNKHCLISSDTKGWIIIWNINAKRPIRKWQAHDETILTLTLISTNTLLTHGRDASLKIWDISVEHAESSPPELFFLPINTLNFCNVQYFNDFLITPASVDSNNFDIYKITNPEYEFKRVLANFSPFDLYSKNKTEINSPNEQGRNDFGIIMKLVYVEHSNQLFLGFESGQIIGLNINLNPDATLVDKTTEAYSKKTPSKYGGLSSLIDKTSSRTLINKEPRVNLIYSDSSHIPNPITSLVHLKDNILISGSTNKQVIVHHYQMHSIDSSDAHLDVKKVAHSGIQSIVADEKTDTIFIGHWNGVIEGVDYKSNKKKLDSQFELKRDLPHLITTSTNSSGGDTNTIAKEAVKLTSLALSIERENTQVTTTKKKSYKDLVKARSAYIGNDNRLLFAGYEDGAVVAYRL.

WD repeat units follow at residues 14–55 (SHEN…PIRK), 58–96 (AHDE…AESS), 100–144 (LFFL…YEFK), 258–296 (HIPN…IDSS), and 395–432 (TKKK…AYRL).

This sequence belongs to the WD repeat ASA1 family. In terms of assembly, component of the ASTRA chromatin remodeling machinery complex.

Its subcellular location is the nucleus. Its function is as follows. Component of the ASTRA complex involved in chromatin remodeling. In Scheffersomyces stipitis (strain ATCC 58785 / CBS 6054 / NBRC 10063 / NRRL Y-11545) (Yeast), this protein is ASTRA-associated protein 1 (ASA1).